Reading from the N-terminus, the 227-residue chain is LexA repressor (227 aa).

The H-T-H motif DNA-binding region spans 25–45 (FDEMKDALDLRSKSGIHRLIT). Catalysis depends on for autocatalytic cleavage activity residues Ser148 and Lys186.

This sequence belongs to the peptidase S24 family. As to quaternary structure, homodimer.

It catalyses the reaction Hydrolysis of Ala-|-Gly bond in repressor LexA.. In terms of biological role, represses a number of genes involved in the response to DNA damage (SOS response), including recA and lexA. In the presence of single-stranded DNA, RecA interacts with LexA causing an autocatalytic cleavage which disrupts the DNA-binding part of LexA, leading to derepression of the SOS regulon and eventually DNA repair. The protein is LexA repressor of Cereibacter sphaeroides (strain ATCC 17029 / ATH 2.4.9) (Rhodobacter sphaeroides).